Here is a 932-residue protein sequence, read N- to C-terminus: Protein translocase subunit SecA (932 aa).

Residues Q83, 101 to 105 (GEGKT), and D491 contribute to the ATP site.

This sequence belongs to the SecA family. Monomer and homodimer. Part of the essential Sec protein translocation apparatus which comprises SecA, SecYEG and auxiliary proteins SecDF. Other proteins may also be involved.

It localises to the cell inner membrane. Its subcellular location is the cellular thylakoid membrane. The protein localises to the cytoplasm. The enzyme catalyses ATP + H2O + cellular proteinSide 1 = ADP + phosphate + cellular proteinSide 2.. In terms of biological role, part of the Sec protein translocase complex. Interacts with the SecYEG preprotein conducting channel. Has a central role in coupling the hydrolysis of ATP to the transfer of proteins into and across the cell membrane, serving as an ATP-driven molecular motor driving the stepwise translocation of polypeptide chains across the membrane. Functionally, probably participates in protein translocation into and across both the cytoplasmic and thylakoid membranes in cyanobacterial cells. In Cyanothece sp. (strain PCC 7425 / ATCC 29141), this protein is Protein translocase subunit SecA.